Here is an 86-residue protein sequence, read N- to C-terminus: Small ribosomal subunit protein uS15c (86 aa).

It belongs to the universal ribosomal protein uS15 family. As to quaternary structure, part of the 30S ribosomal subunit.

It localises to the plastid. This is Small ribosomal subunit protein uS15c (rps15) from Cuscuta obtusiflora (Peruvian dodder).